The following is a 481-amino-acid chain: Cardiolipin synthase A (481 aa).

2 helical membrane-spanning segments follow: residues 10-30 (FFGYLLGLIHLLGIVAALHAL) and 40-60 (IAWAMPLLFIPYLTLIPYLIF). PLD phosphodiesterase domains follow at residues 220–247 (VNFRNHRKIVVVDGLLGFIGGHNVGDEY) and 394–421 (QPGFLHQKVVLVDDDVSAIGSANLDNRS). Residues histidine 225, lysine 227, aspartate 232, histidine 399, lysine 401, and aspartate 406 contribute to the active site.

Belongs to the phospholipase D family. Cardiolipin synthase subfamily. ClsA sub-subfamily.

The protein resides in the cell inner membrane. The catalysed reaction is 2 a 1,2-diacyl-sn-glycero-3-phospho-(1'-sn-glycerol) = a cardiolipin + glycerol. Catalyzes the reversible phosphatidyl group transfer from one phosphatidylglycerol molecule to another to form cardiolipin (CL) (diphosphatidylglycerol) and glycerol. This chain is Cardiolipin synthase A, found in Pseudomonas putida (strain ATCC 47054 / DSM 6125 / CFBP 8728 / NCIMB 11950 / KT2440).